The sequence spans 359 residues: DNA integrity scanning protein DisA (359 aa).

The DAC domain maps to Glu10–Ile148. Residues Gly77, Leu95, and Met108–Thr112 each bind ATP.

Belongs to the DisA family. In terms of assembly, homooctamer. Requires Mg(2+) as cofactor.

The enzyme catalyses 2 ATP = 3',3'-c-di-AMP + 2 diphosphate. In terms of biological role, participates in a DNA-damage check-point that is active prior to asymmetric division when DNA is damaged. DisA forms globular foci that rapidly scan along the chromosomes during sporulation, searching for lesions. When a lesion is present, DisA pauses at the lesion site. This triggers a cellular response that culminates in a temporary block in sporulation initiation. Functionally, also has diadenylate cyclase activity, catalyzing the condensation of 2 ATP molecules into cyclic di-AMP (c-di-AMP). c-di-AMP acts as a signaling molecule that couples DNA integrity with progression of sporulation. The rise in c-di-AMP level generated by DisA while scanning the chromosome, operates as a positive signal that advances sporulation; upon encountering a lesion, the DisA focus arrests at the damaged site and halts c-di-AMP synthesis. The chain is DNA integrity scanning protein DisA from Bacillus pumilus (strain SAFR-032).